The primary structure comprises 185 residues: C-phycoerythrin beta chain (185 aa).

Cysteine 49 and cysteine 60 together coordinate (2R,3E)-phycoerythrobilin. Asparagine 71 carries the N4-methylasparagine modification. The (2R,3E)-phycoerythrobilin site is built by cysteine 81 and cysteine 166.

It belongs to the phycobiliprotein family. As to quaternary structure, heterodimer of an alpha and a beta chain. In terms of processing, contains three covalently linked bilin chromophores.

The protein resides in the cellular thylakoid membrane. In terms of biological role, light-harvesting photosynthetic bile pigment-protein from the phycobiliprotein complex. The sequence is that of C-phycoerythrin beta chain (cpeB) from Pseudanabaena tenuis (strain PCC 7409).